The sequence spans 118 residues: Small ribosomal subunit protein mS37 (118 aa).

In terms of domain architecture, CHCH spans 42–84; sequence EATCITEMSVMMACWKQNEFRDDACRKEIQGFLDCAARAQEAR. 2 short sequence motifs (cx9C motif) span residues 45 to 55 and 66 to 76; these read CITEMSVMMAC and CRKEIQGFLDC. Intrachain disulfides connect Cys-45–Cys-76 and Cys-55–Cys-66.

It belongs to the mitochondrion-specific ribosomal protein mS37 family. Component of the mitochondrial small ribosomal subunit (mt-SSU). Mature mammalian 55S mitochondrial ribosomes consist of a small (28S) and a large (39S) subunit. The 28S small subunit contains a 12S ribosomal RNA (12S mt-rRNA) and 30 different proteins. The 39S large subunit contains a 16S rRNA (16S mt-rRNA), a copy of mitochondrial valine transfer RNA (mt-tRNA(Val)), which plays an integral structural role, and 52 different proteins.

It localises to the mitochondrion. The protein resides in the nucleus. This is Small ribosomal subunit protein mS37 (CHCHD1) from Homo sapiens (Human).